Consider the following 542-residue polypeptide: Malate synthase, glyoxysomal (542 aa).

The active-site Proton acceptor is R168. Catalysis depends on D449, which acts as the Proton donor. The short motif at 540 to 542 (SKL) is the Microbody targeting signal element.

Belongs to the malate synthase family.

It is found in the glyoxysome. The enzyme catalyses glyoxylate + acetyl-CoA + H2O = (S)-malate + CoA + H(+). The protein operates within carbohydrate metabolism; glyoxylate cycle; (S)-malate from isocitrate: step 2/2. The protein is Malate synthase, glyoxysomal (acu-9) of Neurospora crassa (strain ATCC 24698 / 74-OR23-1A / CBS 708.71 / DSM 1257 / FGSC 987).